A 143-amino-acid polypeptide reads, in one-letter code: Myocilin opposite strand protein (143 aa).

Residues 65-111 form a disordered region; the sequence is MATRDETITKKSGEGEEMLPSMGMDHESPSKAHLMVPPAPPPSPADA. Residues 66-78 are compositionally biased toward basic and acidic residues; sequence ATRDETITKKSGE.

This is Myocilin opposite strand protein from Mus musculus (Mouse).